A 490-amino-acid chain; its full sequence is Betaine aldehyde dehydrogenase (490 aa).

2 residues coordinate K(+): Thr26 and Asp93. 150–152 (GAW) serves as a coordination point for NAD(+). Lys162 functions as the Charge relay system in the catalytic mechanism. 176–179 (KPSE) contributes to the NAD(+) binding site. A K(+)-binding site is contributed by Val180. Residue 230–233 (GVAT) coordinates NAD(+). Residue Leu246 coordinates K(+). The active-site Proton acceptor is the Glu252. 3 residues coordinate NAD(+): Gly254, Cys286, and Glu387. The active-site Nucleophile is Cys286. Cysteine sulfenic acid (-SOH) is present on Cys286. Residues Lys457 and Gly460 each contribute to the K(+) site. Glu464 (charge relay system) is an active-site residue.

This sequence belongs to the aldehyde dehydrogenase family. Dimer of dimers. The cofactor is K(+).

The catalysed reaction is betaine aldehyde + NAD(+) + H2O = glycine betaine + NADH + 2 H(+). The protein operates within amine and polyamine biosynthesis; betaine biosynthesis via choline pathway; betaine from betaine aldehyde: step 1/1. Its function is as follows. Involved in the biosynthesis of the osmoprotectant glycine betaine. Catalyzes the irreversible oxidation of betaine aldehyde to the corresponding acid. The polypeptide is Betaine aldehyde dehydrogenase (Stenotrophomonas maltophilia (strain R551-3)).